Reading from the N-terminus, the 199-residue chain is Recombination protein RecR (199 aa).

The C4-type zinc finger occupies C56–C71. One can recognise a Toprim domain in the interval S79–G174.

It belongs to the RecR family.

May play a role in DNA repair. It seems to be involved in an RecBC-independent recombinational process of DNA repair. It may act with RecF and RecO. The polypeptide is Recombination protein RecR (Synechococcus sp. (strain JA-3-3Ab) (Cyanobacteria bacterium Yellowstone A-Prime)).